The primary structure comprises 207 residues: Protein DMP1 (207 aa).

The interval 1 to 20 (MSETSLLIPKTNSPASSENM) is disordered. 4 consecutive transmembrane segments (helical) span residues 33 to 53 (LIKL…PVLT), 64 to 84 (VMSS…CFTD), 121 to 141 (IADF…VLLD), and 159 to 179 (LVMA…ALFP).

This sequence belongs to the plant DMP1 protein family. In terms of tissue distribution, expressed in leaves, siliques and roots.

The protein localises to the endoplasmic reticulum membrane. Its subcellular location is the vacuole membrane. In terms of biological role, involved in membrane remodeling including fission during breakdown of the endoplasmic reticulum (ER) and the tonoplast during leaf senescence and in membrane fusion during vacuole biogenesis in roots. The sequence is that of Protein DMP1 from Arabidopsis thaliana (Mouse-ear cress).